Here is a 135-residue protein sequence, read N- to C-terminus: Auxin-responsive protein SAUR66 (135 aa).

This sequence belongs to the ARG7 family.

It localises to the cell membrane. May promote auxin-stimulated organ elongation, such as hypocotyls, stamen filaments and petals. In Arabidopsis thaliana (Mouse-ear cress), this protein is Auxin-responsive protein SAUR66.